The sequence spans 305 residues: DNA-directed RNA polymerase 35 kDa subunit (305 aa).

This sequence belongs to the poxviridae DNA-directed RNA polymerase 35 kDa subunit family. The DNA-dependent RNA polymerase used for intermediate and late genes expression consists of eight subunits 147 kDa, 133 kDa, 35 kDa, 30 kDa, 22 kDa, 19 kDa, 18 kDa and 7 kDa totalling more than 500 kDa in mass. The same holoenzyme, with the addition of the transcription-specificity factor RAP94, is used for early gene expression.

Its subcellular location is the virion. The enzyme catalyses RNA(n) + a ribonucleoside 5'-triphosphate = RNA(n+1) + diphosphate. Its function is as follows. Part of the DNA-dependent RNA polymerase which catalyzes the transcription of viral DNA into RNA using the four ribonucleoside triphosphates as substrates. Responsible for the transcription of early, intermediate and late genes. DNA-dependent RNA polymerase associates with the early transcription factor (ETF), itself composed of D6 and A7, thereby allowing the early genes transcription. Late transcription, and probably also intermediate transcription, require newly synthesized RNA polymerase. This is DNA-directed RNA polymerase 35 kDa subunit (OPG156) from Cynomys gunnisoni (Gunnison's prairie dog).